The chain runs to 163 residues: UPF0587 protein CG4646 (163 aa).

Zn(2+) is bound by residues Cys-33, Cys-36, Cys-68, and Cys-71.

The protein belongs to the UPF0587 family.

The chain is UPF0587 protein CG4646 from Drosophila melanogaster (Fruit fly).